The chain runs to 265 residues: 4-hydroxy-tetrahydrodipicolinate reductase (265 aa).

Residues 9–14, 100–102, and 124–127 each bind NAD(+); these read GALGRM, GTT, and SPNM. His-158 functions as the Proton donor/acceptor in the catalytic mechanism. (S)-2,3,4,5-tetrahydrodipicolinate is bound at residue His-159. Catalysis depends on Lys-162, which acts as the Proton donor. 168-169 is a (S)-2,3,4,5-tetrahydrodipicolinate binding site; the sequence is GT.

The protein belongs to the DapB family.

It is found in the cytoplasm. The catalysed reaction is (S)-2,3,4,5-tetrahydrodipicolinate + NAD(+) + H2O = (2S,4S)-4-hydroxy-2,3,4,5-tetrahydrodipicolinate + NADH + H(+). It catalyses the reaction (S)-2,3,4,5-tetrahydrodipicolinate + NADP(+) + H2O = (2S,4S)-4-hydroxy-2,3,4,5-tetrahydrodipicolinate + NADPH + H(+). The protein operates within amino-acid biosynthesis; L-lysine biosynthesis via DAP pathway; (S)-tetrahydrodipicolinate from L-aspartate: step 4/4. Functionally, catalyzes the conversion of 4-hydroxy-tetrahydrodipicolinate (HTPA) to tetrahydrodipicolinate. This chain is 4-hydroxy-tetrahydrodipicolinate reductase, found in Aquifex aeolicus (strain VF5).